The following is a 57-amino-acid chain: Dendroaspis polylepis MT9 (57 aa).

4 disulfide bridges follow: cysteine 3–cysteine 22, cysteine 17–cysteine 36, cysteine 38–cysteine 49, and cysteine 50–cysteine 55.

It belongs to the three-finger toxin family. Short-chain subfamily. Expressed by the venom gland.

It is found in the secreted. In terms of biological role, when tested on muscarinic GPCR, specifically antagonizes the type 2 receptor (CHRM2) subtype (Ki/Kd=120-399 nM). Ex vivo, it reverses the M2R-agonist-induced relaxation in rat and human arteries. The polypeptide is Dendroaspis polylepis MT9 (Dendroaspis polylepis polylepis (Black mamba)).